A 404-amino-acid polypeptide reads, in one-letter code: Putative aspartate aminotransferase, cytoplasmic 2 (404 aa).

Residue Lys249 is modified to N6-(pyridoxal phosphate)lysine.

Belongs to the class-I pyridoxal-phosphate-dependent aminotransferase family. As to quaternary structure, homodimer. Pyridoxal 5'-phosphate is required as a cofactor.

It is found in the cytoplasm. The enzyme catalyses L-aspartate + 2-oxoglutarate = oxaloacetate + L-glutamate. In Mus musculus (Mouse), this protein is Putative aspartate aminotransferase, cytoplasmic 2 (Got1l1).